A 403-amino-acid chain; its full sequence is cAMP-dependent protein kinase regulatory subunit (403 aa).

The interval 1-155 (MADYTIPSEL…RIQASIGNNF (155 aa)) is dimerization and phosphorylation. The disordered stretch occupies residues 79-125 (YAYSTDDGFGTEDDDDDDDDEDDEAAIPPPVVNRGRRTSVSAESMAP). A compositionally biased stretch (acidic residues) spans 87-103 (FGTEDDDDDDDDEDDEA). Ser-117 is subject to Phosphoserine. 3',5'-cyclic AMP contacts are provided by residues 156–278 (LFRN…EEVP), Glu-226, Arg-235, 279–403 (LLSS…PGEH), Glu-349, and Arg-358.

Belongs to the cAMP-dependent kinase regulatory chain family. As to quaternary structure, tetramer, composed of 2 regulatory (R) and 2 catalytic (C) subunits. In the presence of cAMP it dissociates into 2 active monomeric C subunits and an R dimer that binds four cAMP molecules.

This chain is cAMP-dependent protein kinase regulatory subunit (PKAR), found in Blastocladiella emersonii (Aquatic fungus).